The primary structure comprises 843 residues: Phosphatidylinositol-glycan-specific phospholipase D (843 aa).

An N-terminal signal peptide occupies residues 1–23 (MSVGRLWSGLLLLLLFFCSRSSS). N-linked (GlcNAc...) asparagine glycans are attached at residues Asn-94, Asn-271, Asn-292, Asn-308, and Asn-322. 7 FG-GAP repeats span residues 368–429 (SPSA…GLPP), 435–498 (DKEA…GRLS), 500–560 (SPNI…RNDK), 564–625 (TLDE…SLGR), 635–695 (QREI…GATR), 707–773 (ALFS…TLGD), and 791–843 (QYVL…FSSD). N-linked (GlcNAc...) asparagine glycosylation is found at Asn-483, Asn-502, Asn-592, Asn-605, and Asn-661.

This sequence belongs to the GPLD1 family. In terms of assembly, monomer. Glycosylated.

It is found in the secreted. It carries out the reaction a 6-(alpha-D-glucosaminyl)-1-(1,2-diacyl-sn-glycero-3-phospho)-1D-myo-inositol + H2O = 6-(alpha-D-glucosaminyl)-1D-myo-inositol + a 1,2-diacyl-sn-glycero-3-phosphate + H(+). Its function is as follows. This protein hydrolyzes the inositol phosphate linkage in proteins anchored by phosphatidylinositol glycans (GPI-anchor) thus releasing these proteins from the membrane. In Rattus norvegicus (Rat), this protein is Phosphatidylinositol-glycan-specific phospholipase D (Gpld1).